The sequence spans 449 residues: Glutamyl-tRNA reductase (449 aa).

Substrate is bound by residues 58–61 (TCNR), Ser-121, 126–128 (ETQ), and Gln-132. The active-site Nucleophile is Cys-59. An NADP(+)-binding site is contributed by 203 to 208 (GLGEMA).

This sequence belongs to the glutamyl-tRNA reductase family. In terms of assembly, homodimer.

It catalyses the reaction (S)-4-amino-5-oxopentanoate + tRNA(Glu) + NADP(+) = L-glutamyl-tRNA(Glu) + NADPH + H(+). The protein operates within porphyrin-containing compound metabolism; protoporphyrin-IX biosynthesis; 5-aminolevulinate from L-glutamyl-tRNA(Glu): step 1/2. In terms of biological role, catalyzes the NADPH-dependent reduction of glutamyl-tRNA(Glu) to glutamate 1-semialdehyde (GSA). This is Glutamyl-tRNA reductase from Helicobacter pylori (strain HPAG1).